The sequence spans 396 residues: 1-deoxy-D-xylulose 5-phosphate reductoisomerase (396 aa).

Residues T14, G15, S16, I17, G40, and N128 each contribute to the NADPH site. Position 129 (K129) interacts with 1-deoxy-D-xylulose 5-phosphate. NADPH is bound at residue E130. D154 is a Mn(2+) binding site. 4 residues coordinate 1-deoxy-D-xylulose 5-phosphate: S155, E156, S180, and H203. A Mn(2+)-binding site is contributed by E156. Residue G209 coordinates NADPH. 4 residues coordinate 1-deoxy-D-xylulose 5-phosphate: S216, N221, K222, and E225. E225 contributes to the Mn(2+) binding site.

The protein belongs to the DXR family. Requires Mg(2+) as cofactor. The cofactor is Mn(2+).

It catalyses the reaction 2-C-methyl-D-erythritol 4-phosphate + NADP(+) = 1-deoxy-D-xylulose 5-phosphate + NADPH + H(+). Its pathway is isoprenoid biosynthesis; isopentenyl diphosphate biosynthesis via DXP pathway; isopentenyl diphosphate from 1-deoxy-D-xylulose 5-phosphate: step 1/6. Its function is as follows. Catalyzes the NADPH-dependent rearrangement and reduction of 1-deoxy-D-xylulose-5-phosphate (DXP) to 2-C-methyl-D-erythritol 4-phosphate (MEP). In Xylella fastidiosa (strain 9a5c), this protein is 1-deoxy-D-xylulose 5-phosphate reductoisomerase.